A 256-amino-acid chain; its full sequence is Small ribosomal subunit protein eS1 (256 aa).

Alanine 2 is modified (N-acetylalanine; partial).

Belongs to the eukaryotic ribosomal protein eS1 family. In terms of assembly, component of the small ribosomal subunit. Mature ribosomes consist of a small (40S) and a large (60S) subunit. The 40S subunit contains about 33 different proteins and 1 molecule of RNA (18S). The 60S subunit contains about 49 different proteins and 3 molecules of RNA (25S, 5.8S and 5S).

The protein resides in the cytoplasm. The polypeptide is Small ribosomal subunit protein eS1 (Lachancea thermotolerans (strain ATCC 56472 / CBS 6340 / NRRL Y-8284) (Yeast)).